Consider the following 1647-residue polypeptide: MAP kinase-activating death domain protein (1647 aa).

Positions 14–268 constitute a uDENN domain; it reads YLVIVGARHP…VPVSGQKRVD (255 aa). The span at 108–122 shows a compositional bias: basic and acidic residues; the sequence is EKGEGGAGSRGKEGT. Residues 108–168 are disordered; that stretch reads EKGEGGAGSR…GKRRAKAGSR (61 aa). Residues 128-141 are compositionally biased toward low complexity; sequence SEEGGTESSESGSS. Residues 142 to 157 are compositionally biased toward polar residues; sequence LQPLSADSTPDVNQSP. The residue at position 156 (Ser156) is a Phosphoserine. The span at 158–167 shows a compositional bias: basic residues; that stretch reads RGKRRAKAGS. Positions 289–429 constitute a cDENN domain; that stretch reads RFTLVDFPLH…ESLELKKHLK (141 aa). The 135-residue stretch at 431–565 folds into the dDENN domain; it reads ALASMSLNTQ…LNPTNYAFQR (135 aa). 2 disordered regions span residues 604–636 and 678–842; these read ALSV…SSYS and NQKE…STEG. A compositionally biased stretch (acidic residues) spans 615-630; the sequence is SEPTDDSGSDSMDYDD. Phosphoserine is present on residues Ser689 and Ser692. Residues 689 to 699 show a composition bias toward polar residues; the sequence is SENSQENPPLR. Over residues 700-712 the composition is skewed to low complexity; it reads SSSSTTASSSPST. The span at 750–768 shows a compositional bias: basic and acidic residues; sequence NVDRRQAEIGEGSVRRRIY. A compositionally biased stretch (polar residues) spans 790-804; it reads ESYTPRFSQHVSGNR. 3 positions are modified to phosphoserine: Ser813, Ser818, and Ser820. The segment covering 827–840 has biased composition (low complexity); sequence RASSPNSTVSNTST. A phosphoserine mark is found at Ser858, Ser862, Ser916, Ser921, and Ser930. Disordered stretches follow at residues 913–941, 1051–1110, and 1146–1243; these read QKSS…SSEN, KEPD…DTRS, and VFDL…DSEI. Residues 932–941 are compositionally biased toward polar residues; that stretch reads QGRSSNSSEN. Ser1059 carries the phosphoserine modification. A phosphothreonine mark is found at Thr1061 and Thr1066. The residue at position 1110 (Ser1110) is a Phosphoserine. Polar residues-rich tracts occupy residues 1158-1173, 1189-1207, and 1234-1243; these read QISA…SSQR, RSSS…SSGE, and SRGTLSDSEI. Thr1237 carries the phosphothreonine modification. Residues Ser1239 and Ser1270 each carry the phosphoserine modification. Residues 1340–1415 enclose the Death domain; the sequence is GMDQGPQEMI…GLVYSQQINE (76 aa).

This sequence belongs to the MADD family. As to quaternary structure, interacts (via death domain) with TNFRSF1A (via death domain). Interacts with PIDD1. Interacts with YWHAZ. Interacts (via death domain) with KIF1B; links the motor KIF1B to Rab3-carrying vesicles in anterograde synaptic vesicle transport. Interacts with KIF1A. Interacts (via uDENN domain) with RAB3A, RAB3B, RAB3C and RAB3D; the GTP-bound form of the Rab proteins is preferred for interaction. In terms of tissue distribution, expressed in testis, ovary, brain and heart. Expressed in spleen, thymus, prostate, testis, ovary, small instestine and colon. Expressed in liver. As to expression, not detected in the brain, breast, kidney, lung, ovary, pancreas, testis, uterus, stomach and thyroid. Expressed in the brain, breast, kidney, lung, ovary, pancreas, testis, uterus, stomach and thyroid.

It localises to the cell membrane. The protein resides in the cytoplasm. The protein localises to the cell projection. It is found in the axon. In terms of biological role, guanyl-nucleotide exchange factor that regulates small GTPases of the Rab family. Converts GDP-bound inactive form of RAB27A and RAB27B to the GTP-bound active forms. Converts GDP-bound inactive form of RAB3A, RAB3C and RAB3D to the GTP-bound active forms, GTPases involved in synaptic vesicle exocytosis and vesicle secretion. Plays a role in synaptic vesicle formation and in vesicle trafficking at the neuromuscular junction. Involved in up-regulating a post-docking step of synaptic exocytosis in central synapses. Probably by binding to the motor proteins KIF1B and KIF1A, mediates motor-dependent transport of GTP-RAB3A-positive vesicles to the presynaptic nerve terminals. Plays a role in TNFA-mediated activation of the MAPK pathway, including ERK1/2. May link TNFRSF1A with MAP kinase activation. May be involved in the regulation of TNFA-induced apoptosis. In Homo sapiens (Human), this protein is MAP kinase-activating death domain protein.